We begin with the raw amino-acid sequence, 128 residues long: Glycine cleavage system H protein (128 aa).

The 83-residue stretch at 25–107 (TITVGITHHA…YGAGWFFKIK (83 aa)) folds into the Lipoyl-binding domain. The residue at position 66 (lysine 66) is an N6-lipoyllysine.

Belongs to the GcvH family. As to quaternary structure, the glycine cleavage system is composed of four proteins: P, T, L and H. (R)-lipoate is required as a cofactor.

Its function is as follows. The glycine cleavage system catalyzes the degradation of glycine. The H protein shuttles the methylamine group of glycine from the P protein to the T protein. The sequence is that of Glycine cleavage system H protein from Neisseria meningitidis serogroup C (strain 053442).